The chain runs to 920 residues: Urea transporter 2 (920 aa).

The segment at 25-57 is disordered; that stretch reads FTSPSWPSTSPDTHPALPLLEMPEEKDLRSSNE. A compositionally biased stretch (low complexity) spans 26–39; the sequence is TSPSWPSTSPDTHP. Residues 47–57 show a composition bias toward basic and acidic residues; that stretch reads PEEKDLRSSNE. 9 helical membrane passes run 151 to 170, 176 to 196, 204 to 224, 233 to 253, 272 to 291, 302 to 322, 346 to 366, 370 to 390, and 392 to 412; these read WWTI…ALAL, AIAS…MAVF, WWLL…SSAL, LPVF…ATGH, ITWT…VGVG, GGVF…HAAI, WSYN…ALTW, LLAL…SNIM, and VVGV…FLLL. Residues 446–467 form a disordered region; the sequence is EKAPSGGGGEHPPTAGPKVEEG. S477 carries the phosphoserine modification. A run of 4 helical transmembrane segments spans residues 600-620, 638-658, 666-686, and 695-715; these read GILI…SGCL, AIAA…MAVF, WWLL…SSAL, and LPVF…ATGH. An N-linked (GlcNAc...) asparagine glycan is attached at N733. Transmembrane regions (helical) follow at residues 764–784, 803–823, 832–852, and 854–874; these read GGIF…HAAI, IYFG…GGMF, LLAI…ANML, and VFGL…FLLL.

This sequence belongs to the urea transporter family. In terms of assembly, interacts with SNAPIN which enhances its urea transport activity. As to expression, epressed in the inner medulla of the kidney (at protein level). Expressed in the kidney.

It localises to the apical cell membrane. It is found in the cell membrane. The catalysed reaction is urea(in) = urea(out). Its activity is regulated as follows. Inhibited by phloretin. Its function is as follows. Mediates the transport of urea driven by a concentration gradient across the cell membrane of the renal inner medullary collecting duct which is critical to the urinary concentrating mechanism. Mediates the transport of urea driven by a concentration gradient across the cell membrane of the kidney inner medullary collecting duct which is critical to the urinary concentrating mechanism. This Homo sapiens (Human) protein is Urea transporter 2 (SLC14A2).